Here is a 272-residue protein sequence, read N- to C-terminus: MSVYVITGASKGIGFGFVKSISEDPANLVVGLVRDKAATEKKVAEELGGRTNIHILHGDLTSYESLKQAAADTAKIVGERGVDYLVANGAYPSQFDAYVPIGALGDQVEELEEVSAKLFKTNVVGNIHLFNLFIPLVKQSKAKKVIAISSGHGDLDWINNNDIEISSLYGASKAALNVVVAKFSVQYKPEGVLFFSLSPGAVEVGHYDNVSPEQVQGLMGFMGKIQAYAPHFKGAVPVEDAVRTIRATWERASIETGYAGAFVSQHGNKQWL.

Positions 13, 59, and 88 each coordinate NADP(+). Active-site proton donor residues include Ser150 and Tyr169. Tyr169, Lys173, and Val202 together coordinate NADP(+). Lys173 serves as the catalytic Lowers pKa of active site Tyr.

It belongs to the short-chain dehydrogenases/reductases (SDR) family.

It participates in secondary metabolite biosynthesis. Short-chain dehydrogenase/reductase; part of the gene cluster that mediates the biosynthesis of iso-A82775C, a enylepoxycyclohexane and biosynthetic precursor of the chloropestolide anticancer natural products. Within the cluster, the prenyltransferase iacE prenylates siccayne to generate pestalodiol E, using dimethylallyl diphosphate (DMAPP) as cosubstrate. The probable oxidoreductase iacF is then involved in the epoxidation of pestalodiol F to pestalodiol F, which is further converted to pestalofone A by the short-chain dehydrogenase/reductase iacG. Iso-A82775C is subsequently generated from pestalofone A by the short-chain dehydrogenase/reductase iacC. Iso-A82775C is further condensed with maldoxin via a Diels-Alder reaction to produce the anticancer natural products chloropestolides A to E. The protein is Short-chain dehydrogenase/reductase iacC of Pestalotiopsis fici (strain W106-1 / CGMCC3.15140).